The sequence spans 39 residues: Cytochrome b559 subunit beta (39 aa).

The chain crosses the membrane as a helical span at residues W14 to S30. H18 lines the heme pocket.

The protein belongs to the PsbE/PsbF family. Heterodimer of an alpha subunit and a beta subunit. PSII is composed of 1 copy each of membrane proteins PsbA, PsbB, PsbC, PsbD, PsbE, PsbF, PsbH, PsbI, PsbJ, PsbK, PsbL, PsbM, PsbT, PsbX, PsbY, PsbZ, Psb30/Ycf12, at least 3 peripheral proteins of the oxygen-evolving complex and a large number of cofactors. It forms dimeric complexes. Heme b serves as cofactor.

The protein resides in the plastid. Its subcellular location is the chloroplast thylakoid membrane. Its function is as follows. This b-type cytochrome is tightly associated with the reaction center of photosystem II (PSII). PSII is a light-driven water:plastoquinone oxidoreductase that uses light energy to abstract electrons from H(2)O, generating O(2) and a proton gradient subsequently used for ATP formation. It consists of a core antenna complex that captures photons, and an electron transfer chain that converts photonic excitation into a charge separation. This is Cytochrome b559 subunit beta from Cedrus deodara (Deodar cedar).